Reading from the N-terminus, the 118-residue chain is Transcription factor PAR2 (118 aa).

Residues 1–59 (MEKTLATSHTKRSSPPSPSSAVNTSSTGFNRRTRQRLSDATASVSETDVEDEDEDEEGV) form a disordered region. Polar residues predominate over residues 19–30 (SSAVNTSSTGFN). One can recognise a bHLH domain in the interval 43–92 (SVSETDVEDEDEDEEGVEEKIEALQTIVPGGTELGVDALFEETASYILAL). Residues 47–59 (TDVEDEDEDEEGV) show a composition bias toward acidic residues.

The protein belongs to the bHLH protein family. Homodimer.

It localises to the nucleus. Functionally, atypical bHLH transcription factor that acts as a negative regulator of a variety of shade avoidance syndrome (SAS) responses, including seedling elongation and photosynthetic pigment accumulation. Acts as a direct transcriptional repressor of two auxin-responsive genes, SAUR15 and SAUR68. May function in integrating shade and hormone transcriptional networks in response to light and auxin changes. The sequence is that of Transcription factor PAR2 (PAR2) from Arabidopsis thaliana (Mouse-ear cress).